A 506-amino-acid polypeptide reads, in one-letter code: AAA-ATPase At4g25835 (506 aa).

The first 20 residues, methionine 1–serine 20, serve as a signal peptide directing secretion. Glycine 244–serine 251 is an ATP binding site. Residues glycine 462–serine 506 form a disordered region. A compositionally biased stretch (acidic residues) spans asparagine 487–aspartate 496. Residues asparagine 497–serine 506 show a composition bias toward basic and acidic residues.

It belongs to the AAA ATPase family. BCS1 subfamily. Requires Mg(2+) as cofactor.

It catalyses the reaction ATP + H2O = ADP + phosphate + H(+). This Arabidopsis thaliana (Mouse-ear cress) protein is AAA-ATPase At4g25835.